We begin with the raw amino-acid sequence, 1093 residues long: MYVRNLTGSFRFSLSFLLCFCLFVPSIYAIDGVYHAPYGIDDLYEIQATERSPRDPVAGDTVYIKITTWPIESGQTAWVTWTKNGVNQAAVGAAFKYNSGNNTYWEANLGTFAKGDVISYTVHGNKDGANEKVIGPFTFTVTGWESVSSISSITDNTNRVVLNAVPNTGTLKPKINLSFTADDVLRVQVSPTGTGTLSSGLSNYTVSDTASTTWLTTSKLKVKVDKNPFKLSVYKPDGTTLIARQYDSTTNRNIAWLTNGSTIIDKVEDHFYSPASEEFFGFGEHYNNFRKRGNDVDTYVFNQYKNQNDRTYMAIPFMLNSSGYGIFVNSTYYSKFRLATERTDMFSFTADTGGSAASMLDYYFIYGNDLKNVVSNYANITGKPTALPKWAFGLWMSANEWDRQTKVNTAINNANSNNIPATAVVLEQWSDENTFYIFNDATYTPKTGSAAHAYTDFTFPTSGRWTDPKAMADNVHNNGMKLVLWQVPIQKWTSTPYTQKDNDEAYMTAQNYAVGNGSGGQYRIPSGQWFENSLLLDFTNTAAKNWWMSKRAYLFDGVGIDGFKTDGGEMVWGRSNTFSNGKKGNEMRNQYPNEYVKAYNEYARSKKADAVSFSRSGTQGAQANQIFWSGDQESTFGAFQQAVNAGLTASMSGVPYWSWDMAGFTGTYPTAELYKRATEMAAFAPVMQFHSESNGSSGINEERSPWNAQARTGDNTIISHFAKYTNTRMNLLPYIYSEAKMASDTGVPMMRAMALEYPKDTNTYGLTQQYMFGGNLLIAPVMNQGETNKSIYLPQGDWIDFWFGAQRPGGRTISYTAGIDDLPVFVKFGSILPMNLNAQYQVGGTIGNSLTSYTNLAFRIYPLGTTTYDWNDDIGGSVKTITSTEQYGLNKETVTVPAINSTKTLQVFTTKPSSVTVGGSVMTEYSTLTALTGASTGWYYDTVQKFTYVKLGSSASAQSVVLNGVNKVEYEAEFGVQSGVSTNTNHAGYTGTGFVDGFETLGDNVAFDVSVKAAGTYTMKVRYSSGAGNGSRAIYVNNTKVTDLALPQTTSWDTWGTATFSVSLSTGLNTVKVSYDGTSSLGINFDNIAIVEQ.

The N-terminal stretch at 1-29 is a signal peptide; it reads MYVRNLTGSFRFSLSFLLCFCLFVPSIYA. Residue Asp-566 is the Nucleophile of the active site. The active site involves Glu-569. Asp-631 (proton donor) is an active-site residue. Residues 968–1091 enclose the CBM6 domain; sequence VEYEAEFGVQ…GINFDNIAIV (124 aa).

This sequence belongs to the glycosyl hydrolase 31 family.

The protein resides in the secreted. It carries out the reaction 2 alpha-isomaltosyl-(1-&gt;4)-D-maltotriose = alpha-isomaltosyl-(1-&gt;3)-alpha-isomaltosyl-(1-&gt;4)-D-maltotriose + D-maltotriose. The catalysed reaction is alpha-isomaltosyl-(1-&gt;3)-alpha-isomaltosyl-(1-&gt;4)-D-maltotriose = cyclobis-(1-&gt;3)-alpha-D-isomaltosyl + D-maltotriose. With respect to regulation, strongly inhibited by Hg(2+) and moderately inhibited by Cu(2+) and Pb(2+). Other metal ions, Tris and EDTA have almost no effects. Functionally, glycosyltransferase involved, together with CtsZ, in the conversion of alpha-1,4-glucan into a cyclic tetrasaccharide (CTS) constructed from four alpha-glucopyranosyl residues. Catalyzes the alpha-(1-&gt;3) transfer of the isomaltosyl moiety of alpha-isomaltosyl-(1-&gt;4)-D-maltotriose to another alpha-isomaltosyl-(1-&gt;4)-D-maltotriose, resulting in alpha-isomaltosyl-(1-&gt;3)-alpha-isomaltosyl-alpha-(1-&gt;4)-maltotriose formation. In addition, the enzyme catalyzes the intramolecular cyclization of the product, generating the cyclic tetrasaccharide cyclobis-(1-&gt;6)-alpha-nigerosyl. The chain is Isomaltosyltransferase from Sporosarcina globispora (Bacillus globisporus).